Here is a 393-residue protein sequence, read N- to C-terminus: Formate-dependent phosphoribosylglycinamide formyltransferase (393 aa).

N(1)-(5-phospho-beta-D-ribosyl)glycinamide is bound by residues 22-23 (EL) and E82. ATP contacts are provided by residues R114, K155, 160–165 (SSGKGQ), 195–198 (EGFI), and E203. Residues 119 to 308 (RLAAEELGLP…EFALHARAIL (190 aa)) enclose the ATP-grasp domain. The Mg(2+) site is built by E267 and E279. N(1)-(5-phospho-beta-D-ribosyl)glycinamide contacts are provided by residues D286, K356, and 363–364 (RR).

It belongs to the PurK/PurT family. Homodimer.

The enzyme catalyses N(1)-(5-phospho-beta-D-ribosyl)glycinamide + formate + ATP = N(2)-formyl-N(1)-(5-phospho-beta-D-ribosyl)glycinamide + ADP + phosphate + H(+). The protein operates within purine metabolism; IMP biosynthesis via de novo pathway; N(2)-formyl-N(1)-(5-phospho-D-ribosyl)glycinamide from N(1)-(5-phospho-D-ribosyl)glycinamide (formate route): step 1/1. In terms of biological role, involved in the de novo purine biosynthesis. Catalyzes the transfer of formate to 5-phospho-ribosyl-glycinamide (GAR), producing 5-phospho-ribosyl-N-formylglycinamide (FGAR). Formate is provided by PurU via hydrolysis of 10-formyl-tetrahydrofolate. This Stutzerimonas stutzeri (strain A1501) (Pseudomonas stutzeri) protein is Formate-dependent phosphoribosylglycinamide formyltransferase.